A 379-amino-acid chain; its full sequence is Lipid-A-disaccharide synthase (379 aa).

The protein belongs to the LpxB family.

The catalysed reaction is a lipid X + a UDP-2-N,3-O-bis[(3R)-3-hydroxyacyl]-alpha-D-glucosamine = a lipid A disaccharide + UDP + H(+). It participates in bacterial outer membrane biogenesis; LPS lipid A biosynthesis. Its function is as follows. Condensation of UDP-2,3-diacylglucosamine and 2,3-diacylglucosamine-1-phosphate to form lipid A disaccharide, a precursor of lipid A, a phosphorylated glycolipid that anchors the lipopolysaccharide to the outer membrane of the cell. The chain is Lipid-A-disaccharide synthase from Pseudomonas fluorescens (strain SBW25).